Here is a 166-residue protein sequence, read N- to C-terminus: SsrA-binding protein (166 aa).

Positions 146–166 are disordered; sequence KRAAEKEKQSKKDVKAAMERY.

This sequence belongs to the SmpB family.

The protein localises to the cytoplasm. Functionally, required for rescue of stalled ribosomes mediated by trans-translation. Binds to transfer-messenger RNA (tmRNA), required for stable association of tmRNA with ribosomes. tmRNA and SmpB together mimic tRNA shape, replacing the anticodon stem-loop with SmpB. tmRNA is encoded by the ssrA gene; the 2 termini fold to resemble tRNA(Ala) and it encodes a 'tag peptide', a short internal open reading frame. During trans-translation Ala-aminoacylated tmRNA acts like a tRNA, entering the A-site of stalled ribosomes, displacing the stalled mRNA. The ribosome then switches to translate the ORF on the tmRNA; the nascent peptide is terminated with the 'tag peptide' encoded by the tmRNA and targeted for degradation. The ribosome is freed to recommence translation, which seems to be the essential function of trans-translation. The sequence is that of SsrA-binding protein from Synechococcus sp. (strain CC9605).